A 352-amino-acid chain; its full sequence is Protein RecA (352 aa).

67–74 (GPESSGKT) contacts ATP. The disordered stretch occupies residues 330–352 (STPKPEAESQEKAAAAQDDDSLV).

Belongs to the RecA family.

The protein localises to the cytoplasm. Functionally, can catalyze the hydrolysis of ATP in the presence of single-stranded DNA, the ATP-dependent uptake of single-stranded DNA by duplex DNA, and the ATP-dependent hybridization of homologous single-stranded DNAs. It interacts with LexA causing its activation and leading to its autocatalytic cleavage. The polypeptide is Protein RecA (Chromohalobacter salexigens (strain ATCC BAA-138 / DSM 3043 / CIP 106854 / NCIMB 13768 / 1H11)).